Here is a 41-residue protein sequence, read N- to C-terminus: Tachystatin-C (41 aa).

Disulfide bonds link Cys12–Cys28, Cys19–Cys33, and Cys27–Cys38.

As to expression, granular hemocytes, small secretory granules.

Its subcellular location is the secreted. Functionally, binds to chitin. Shows strong activity against E.coli (IC(50) is 1.2 ug/ml). Is also very active against S.aureus (IC(50) is 0.8 ug/ml), C.albicans (IC(50) is 0.9 ug/ml) and P.pastoris (IC(50) is 0.3 ug/ml). Binds to chitin (5.2 uM are required to obtain 50% of binding). Causes hemolysis on sheep erythrocytes, probably by forming ion-permeable pores. The chain is Tachystatin-C from Tachypleus tridentatus (Japanese horseshoe crab).